We begin with the raw amino-acid sequence, 151 residues long: MRKAIFPGTFDPFTIGHYSVVERALTFMDEIIIGIGINENKNTYFPIEKREEMIRNLYKDNPRIKVMSYDCLTIDFAQQVEAQFIVRGIRTVKDFEYEETIADINRKLAGIETILLFTEPELTCVSSTIVRELLTYNKDISQFIPEGMEIN.

Position 9 (Thr9) interacts with substrate. ATP-binding positions include 9–10 and His17; that span reads TF. The substrate site is built by Lys41, Thr73, and Arg87. ATP-binding positions include 88–90, Glu98, and 122–128; these read GIR and LTCVSST.

Belongs to the bacterial CoaD family. Homohexamer. It depends on Mg(2+) as a cofactor.

Its subcellular location is the cytoplasm. The catalysed reaction is (R)-4'-phosphopantetheine + ATP + H(+) = 3'-dephospho-CoA + diphosphate. The protein operates within cofactor biosynthesis; coenzyme A biosynthesis; CoA from (R)-pantothenate: step 4/5. Functionally, reversibly transfers an adenylyl group from ATP to 4'-phosphopantetheine, yielding dephospho-CoA (dPCoA) and pyrophosphate. The sequence is that of Phosphopantetheine adenylyltransferase from Bacteroides thetaiotaomicron (strain ATCC 29148 / DSM 2079 / JCM 5827 / CCUG 10774 / NCTC 10582 / VPI-5482 / E50).